The sequence spans 659 residues: L-type lectin-domain containing receptor kinase V.7 (659 aa).

The first 25 residues, 1–25, serve as a signal peptide directing secretion; the sequence is MSHKVLQIVLVLLLTLFSSTHNSNG. Positions 22 to 244 are legume-lectin like; that stretch reads NSNGNFLMEE…GALYYVMQFS (223 aa). The Extracellular portion of the chain corresponds to 26-275; the sequence is NFLMEEAAAA…PKKSYDRTRR (250 aa). N-linked (GlcNAc...) asparagine glycosylation is found at Asn-45, Asn-64, Asn-110, and Asn-192. A helical membrane pass occupies residues 276–296; it reads ILAVCLTLAVFTALVASGIGF. Topologically, residues 297 to 659 are cytoplasmic; sequence VFYVRHKKVK…LTNSFVSHGR (363 aa). Residues 333 to 595 form the Protein kinase domain; that stretch reads FKEKQLLGKG…GLLCAHHTEL (263 aa). ATP is bound by residues 339–347 and Lys-362; that span reads LGKGGFGQV. Asp-462 (proton acceptor) is an active-site residue.

This sequence in the C-terminal section; belongs to the protein kinase superfamily. Ser/Thr protein kinase family. In the N-terminal section; belongs to the leguminous lectin family.

It is found in the cell membrane. It catalyses the reaction L-seryl-[protein] + ATP = O-phospho-L-seryl-[protein] + ADP + H(+). The catalysed reaction is L-threonyl-[protein] + ATP = O-phospho-L-threonyl-[protein] + ADP + H(+). Functionally, involved in resistance response to the pathogenic oomycetes Phytophthora infestans and Phytophthora capsici and to the pathogenic bacteria Pseudomonas syringae. This is L-type lectin-domain containing receptor kinase V.7 from Arabidopsis thaliana (Mouse-ear cress).